A 166-amino-acid chain; its full sequence is MAKTLSKPASGALAPWLGISLIVILFDQLSKIAILKTFAYGAQHALTSFFNLVLVYNRGAAFGFLSTASGWQRWAFTALGIGATLVICYLLRRHGQQRLFSLSLALILGGALGNVIDRLLYGHVIDFLDFHLGGWHFPAFNLADSAITVGAVLLIYDELRRVRGTR.

4 helical membrane-spanning segments follow: residues 9–29 (ASGA…FDQL), 45–65 (ALTS…FGFL), 71–91 (WQRW…CYLL), and 99–119 (LFSL…IDRL). Active-site residues include D126 and D144. Residues 135-155 (WHFPAFNLADSAITVGAVLLI) traverse the membrane as a helical segment.

It belongs to the peptidase A8 family.

The protein resides in the cell inner membrane. The catalysed reaction is Release of signal peptides from bacterial membrane prolipoproteins. Hydrolyzes -Xaa-Yaa-Zaa-|-(S,diacylglyceryl)Cys-, in which Xaa is hydrophobic (preferably Leu), and Yaa (Ala or Ser) and Zaa (Gly or Ala) have small, neutral side chains.. It functions in the pathway protein modification; lipoprotein biosynthesis (signal peptide cleavage). Functionally, this protein specifically catalyzes the removal of signal peptides from prolipoproteins. The sequence is that of Lipoprotein signal peptidase from Burkholderia vietnamiensis (strain G4 / LMG 22486) (Burkholderia cepacia (strain R1808)).